We begin with the raw amino-acid sequence, 374 residues long: S-adenosylmethionine:tRNA ribosyltransferase-isomerase (374 aa).

It belongs to the QueA family. In terms of assembly, monomer.

It is found in the cytoplasm. The catalysed reaction is 7-aminomethyl-7-carbaguanosine(34) in tRNA + S-adenosyl-L-methionine = epoxyqueuosine(34) in tRNA + adenine + L-methionine + 2 H(+). The protein operates within tRNA modification; tRNA-queuosine biosynthesis. Functionally, transfers and isomerizes the ribose moiety from AdoMet to the 7-aminomethyl group of 7-deazaguanine (preQ1-tRNA) to give epoxyqueuosine (oQ-tRNA). The protein is S-adenosylmethionine:tRNA ribosyltransferase-isomerase of Prochlorococcus marinus (strain MIT 9301).